Reading from the N-terminus, the 757-residue chain is 5-methyltetrahydropteroyltriglutamate--homocysteine methyltransferase (757 aa).

The 5-methyltetrahydropteroyltri-L-glutamate site is built by Lys-18 and Asn-116. 437 to 439 (IGS) is an L-homocysteine binding site. Residues 437–439 (IGS) and Glu-490 each bind L-methionine. 5-methyltetrahydropteroyltri-L-glutamate-binding positions include 521–522 (RC) and Trp-567. Residue Asp-605 participates in L-homocysteine binding. Position 605 (Asp-605) interacts with L-methionine. 5 residues coordinate Zn(2+): His-647, Cys-649, His-658, Asp-662, and Glu-671. His-701 acts as the Proton donor in catalysis. Cys-733 is a binding site for Zn(2+).

Belongs to the vitamin-B12 independent methionine synthase family. It depends on Zn(2+) as a cofactor. In terms of tissue distribution, expressed in pollen (at protein level).

It carries out the reaction 5-methyltetrahydropteroyltri-L-glutamate + L-homocysteine = tetrahydropteroyltri-L-glutamate + L-methionine. Its pathway is amino-acid biosynthesis; L-methionine biosynthesis via de novo pathway; L-methionine from L-homocysteine (MetE route): step 1/1. In terms of biological role, catalyzes the transfer of a methyl group from 5-methyltetrahydrofolate to homocysteine resulting in methionine formation. The polypeptide is 5-methyltetrahydropteroyltriglutamate--homocysteine methyltransferase (Kali turgidum (Prickly saltwort)).